We begin with the raw amino-acid sequence, 957 residues long: Glycine dehydrogenase (decarboxylating) (957 aa).

Position 708 is an N6-(pyridoxal phosphate)lysine (lysine 708).

The protein belongs to the GcvP family. The glycine cleavage system is composed of four proteins: P, T, L and H. The cofactor is pyridoxal 5'-phosphate.

It carries out the reaction N(6)-[(R)-lipoyl]-L-lysyl-[glycine-cleavage complex H protein] + glycine + H(+) = N(6)-[(R)-S(8)-aminomethyldihydrolipoyl]-L-lysyl-[glycine-cleavage complex H protein] + CO2. The glycine cleavage system catalyzes the degradation of glycine. The P protein binds the alpha-amino group of glycine through its pyridoxal phosphate cofactor; CO(2) is released and the remaining methylamine moiety is then transferred to the lipoamide cofactor of the H protein. This chain is Glycine dehydrogenase (decarboxylating), found in Escherichia coli (strain SE11).